A 391-amino-acid polypeptide reads, in one-letter code: Elongation factor Tu 2 (391 aa).

One can recognise a tr-type G domain in the interval 10–201 (KPHVNIGTIG…EVDRYIPTPE (192 aa)). Residues 19–26 (GHVDHGKT) are G1. 19–26 (GHVDHGKT) lines the GTP pocket. A Mg(2+)-binding site is contributed by Thr-26. Positions 55–59 (GITIS) are G2. The tract at residues 76–79 (DCPG) is G3. Residues 76 to 80 (DCPGH) and 131 to 134 (NKVD) each bind GTP. Residues 131–134 (NKVD) are G4. Residues 169-171 (SAL) form a G5 region.

This sequence belongs to the TRAFAC class translation factor GTPase superfamily. Classic translation factor GTPase family. EF-Tu/EF-1A subfamily. Monomer.

It localises to the cytoplasm. The enzyme catalyses GTP + H2O = GDP + phosphate + H(+). GTP hydrolase that promotes the GTP-dependent binding of aminoacyl-tRNA to the A-site of ribosomes during protein biosynthesis. This chain is Elongation factor Tu 2, found in Bartonella bacilliformis (strain ATCC 35685 / KC583 / Herrer 020/F12,63).